The chain runs to 144 residues: Transcription antitermination protein NusB (144 aa).

This sequence belongs to the NusB family.

Its function is as follows. Involved in transcription antitermination. Required for transcription of ribosomal RNA (rRNA) genes. Binds specifically to the boxA antiterminator sequence of the ribosomal RNA (rrn) operons. The protein is Transcription antitermination protein NusB of Dictyoglomus turgidum (strain DSM 6724 / Z-1310).